Consider the following 204-residue polypeptide: Large ribosomal subunit protein bL25 (204 aa).

The protein belongs to the bacterial ribosomal protein bL25 family. CTC subfamily. Part of the 50S ribosomal subunit; part of the 5S rRNA/L5/L18/L25 subcomplex. Contacts the 5S rRNA. Binds to the 5S rRNA independently of L5 and L18.

Its function is as follows. This is one of the proteins that binds to the 5S RNA in the ribosome where it forms part of the central protuberance. In Wolbachia sp. subsp. Brugia malayi (strain TRS), this protein is Large ribosomal subunit protein bL25.